A 234-amino-acid polypeptide reads, in one-letter code: Protein-toxin resistance protein KTD1 (234 aa).

The Cytoplasmic segment spans residues Met-1 to His-47. The helical transmembrane segment at Cys-48–Phe-68 threads the bilayer. The segment at Phe-68 to Thr-75 is required for resistance to killer toxin K28, a protein-toxin encoded by the M28 virus. Residues His-69–Val-76 lie on the Extracellular side of the membrane. A helical transmembrane segment spans residues Ile-77–Phe-97. Topologically, residues Gly-98–Pro-234 are cytoplasmic. Positions Phe-147–Pro-234 are required for resistance to killer toxin K28, a protein-toxin encoded by the M28 virus. Residues Ser-168–Gly-187 are disordered. The span at Ala-177–Gly-187 shows a compositional bias: polar residues. Residue Lys-217 forms a Glycyl lysine isopeptide (Lys-Gly) (interchain with G-Cter in ubiquitin) linkage.

It belongs to the DUP/COS family.

It localises to the vacuole membrane. Its subcellular location is the golgi apparatus. It is found in the trans-Golgi network membrane. The protein resides in the endosome membrane. Confers resistance to killer toxin K28, a protein-toxin encoded by the M28 virus that uses S.cerevisiae as a host. Probably acts against K28 after endocytosis of the protein-toxin. In Saccharomyces cerevisiae (strain ATCC 204508 / S288c) (Baker's yeast), this protein is Protein-toxin resistance protein KTD1.